Consider the following 170-residue polypeptide: Disulfide bond formation protein B 1 (170 aa).

Topologically, residues 1–14 (MNDYTLAIRRERRL) are cytoplasmic. The chain crosses the membrane as a helical span at residues 15 to 31 (LMLLGWVCIALLAGALY). Residues 32 to 49 (LQYVKNEDPCPLCIIQRY) are Periplasmic-facing. A disulfide bridge links Cys-41 with Cys-44. The chain crosses the membrane as a helical span at residues 50 to 64 (FFCAIGIFAFLAAGI). The Cytoplasmic segment spans residues 65 to 71 (RNWRGVW). The helical transmembrane segment at 72–89 (VLELLIAIAAAGGVGTAA) threads the bilayer. The Periplasmic portion of the chain corresponds to 90–144 (RHLTIQMNPGFSCGFDTLQPIVDSLPPAQWFPGMFKVAGLCETVYPPIFGILLPG). Cys-102 and Cys-130 are oxidised to a cystine. A helical transmembrane segment spans residues 145-163 (WSLIGFAVILIAVVASLWR). Residues 164-170 (HRRKLVG) lie on the Cytoplasmic side of the membrane.

The protein belongs to the DsbB family.

It localises to the cell inner membrane. In terms of biological role, required for disulfide bond formation in some periplasmic proteins. Acts by oxidizing the DsbA protein. The sequence is that of Disulfide bond formation protein B 1 from Burkholderia lata (strain ATCC 17760 / DSM 23089 / LMG 22485 / NCIMB 9086 / R18194 / 383).